Reading from the N-terminus, the 182-residue chain is Large ribosomal subunit protein uL6 (182 aa).

Belongs to the universal ribosomal protein uL6 family. As to quaternary structure, part of the 50S ribosomal subunit.

Functionally, this protein binds to the 23S rRNA, and is important in its secondary structure. It is located near the subunit interface in the base of the L7/L12 stalk, and near the tRNA binding site of the peptidyltransferase center. The chain is Large ribosomal subunit protein uL6 from Nostoc punctiforme (strain ATCC 29133 / PCC 73102).